Consider the following 1356-residue polypeptide: MRLLERDDAGEIRPTKDLPSGKIPPYAILSHTWGPDEEEVSYKDLKDGRAVSKLGYNKIRFCADQAWRDGRKFFWVDTCCIDKSNSTELQEAINSMFRWYRDAAKCYVYLTDVSTDKRDADGDPSWKWAFQKCKWFTRGWTLQELIAPTSVEFFSREKARIGDRNSLERMIHDVTGIPLEALRGSPLSDFSVHDRMAWMKQRNTTREEDMAYSLFGIFDVHLPLIYGEGKEKALERLREKIGKDDGCLADLRVTDPRHDKKRIEAAKGGLLKDSYCWVLSNVQFQQWHDGDDQRLLWINGDPGKGKTMLLCGIIDELKKSTPPGLLSFFFCQATDSRINNATAVLRGLIYLLVSQQPALISHVRRPYDHAGKKMFEGPNVWIVLCEIFTSILQDPGLRMTYLIIDALDECVTDLPQLLELITRTSCTSSPIKWIVSSRNWPDIEEQLETATQKARLSLELNAESISTAVNAFIQNRIDQLAPKTKHDANMIGKIRDYLHSHANGTFLWVALVCQALADPKVKKRHILAKLQTFPRGLDSLYARMLEQIGHSEDAELCKQILAVAAAVRRPISLDELASLVEMPDDVSDDPESLEEIVKLCGSFLIIRERTVYFVHQSAKDFLLGTASDKASNKASQEAFELVFPTGIEDVSYIIFWRSLNVMSQKLRRDIYCLNAPGFLIDNVRVPDPDPLATVRYSCIYWIDHLRDLVSSTSSKWVHLLQDDGDIHRFLTTKYLYWLEALSLLRALPEGINAIRQLESLLGHTIRGRLIAIVRDGYRFALSYRMIIEKAPLQAYTSALVFAPTDSMIKKIFKKEEPGWISTISVVEAEWNACTQTLEGHGSSVLSVAFSADGQRVASGSDDKTIKIWDTASGTGTQTLEGHGGSVWSVAFSPDRERVASGSDDKTIKIWDAASGTCTQTLEGHGGRVQSVAFSPDGQRVASGSDDHTIKIWDAASGTCTQTLEGHGSSVLSVAFSPDGQRVASGSGDKTIKIWDTASGTCTQTLEGHGGSVWSVAFSPDGQRVASGSDDKTIKIWDTASGTCTQTLEGHGGWVQSVVFSPDGQRVASGSDDHTIKIWDAVSGTCTQTLEGHGDSVWSVAFSPDGQRVASGSIDGTIKIWDAASGTCTQTLEGHGGWVHSVAFSPDGQRVASGSIDGTIKIWDAASGTCTQTLEGHGGWVQSVAFSPDGQRVASGSSDKTIKIWDTASGTCTQTLEGHGGWVQSVAFSPDGQRVASGSSDNTIKIWDTASGTCTQTLNVGSTATCLSFDYTNAYINTNIGRIQIATATMESLNQLSSPVCYSYGLGQDHRWITCNNQNVLWLPPEYHTSAFTMQGRKIVLGSYSGRIIIFLFSRDV.

Residues 294-629 (RLLWINGDPG…DFLLGTASDK (336 aa)) form the NACHT domain. 300 to 307 (GDPGKGKT) is a GTP binding site. WD repeat units follow at residues 839-869 (GHGSSVLSVAFSADGQRVASGSDDKTIKIWD), 881-911 (GHGGSVWSVAFSPDRERVASGSDDKTIKIWD), 923-953 (GHGGRVQSVAFSPDGQRVASGSDDHTIKIWD), 965-995 (GHGSSVLSVAFSPDGQRVASGSGDKTIKIWD), 1007-1037 (GHGGSVWSVAFSPDGQRVASGSDDKTIKIWD), 1049-1079 (GHGGWVQSVVFSPDGQRVASGSDDHTIKIWD), 1091-1121 (GHGDSVWSVAFSPDGQRVASGSIDGTIKIWD), 1133-1163 (GHGGWVHSVAFSPDGQRVASGSIDGTIKIWD), 1175-1205 (GHGGWVQSVAFSPDGQRVASGSSDKTIKIWD), and 1217-1247 (GHGGWVQSVAFSPDGQRVASGSSDNTIKIWD).

Functionally, responsible for vegetative incompatibility through specific interactions with different alleles of the unlinked gene, het-c. The sequence is that of Vegetative incompatibility protein HET-E-1 (HET-E1) from Podospora anserina (Pleurage anserina).